The chain runs to 508 residues: Monocarboxylate transporter 9 (508 aa).

A run of 6 helical transmembrane segments spans residues 13–33 (WVIVVVSFFTQFLCYGSPLAV), 53–73 (WVGSLASGVGLLASPVCSLFV), 80–100 (PVTIFSGFLVAGGLMLSSLAP), 102–122 (IYFLFFSYGIVVGLGCGLLYT), 137–157 (GLALGLISTGSSVGLFIYAAL), and 164–184 (FYGLDGCLLIVGALALNILAC). The segment at 242–263 (GDWGRETSLPKNPTGAAHTKEP) is disordered. Helical transmembrane passes span 303 to 323 (VFSALFVAILLFDIGGFPPSL), 341 to 361 (IPLISIFGIMTAVGKLLLGIL), 370 to 390 (LYLYVATLIITGLALCAIPLA), 396 to 416 (LAILSGILGFLTGNWSIFPYV), 431 to 451 (GILMFFAGLGNSLGPPIVGWF), and 460 to 480 (IAFYFSGFCVLLGGFILLLAI).

It belongs to the major facilitator superfamily. Monocarboxylate porter (TC 2.A.1.13) family. As to expression, expressed in the liver and kidneys. In the liver localizes on the sinusoidal membrane of the hepatocytes.

The protein localises to the cell membrane. It catalyses the reaction creatine(in) = creatine(out). The catalysed reaction is (R)-carnitine(in) = (R)-carnitine(out). Its function is as follows. Extracellular pH-and Na(+)-sensitive low-affinity creatine transporter. Also functions as a pH-independent carnitine efflux transporter. The polypeptide is Monocarboxylate transporter 9 (Slc16a9) (Rattus norvegicus (Rat)).